A 443-amino-acid polypeptide reads, in one-letter code: Na(+)-translocating ferredoxin:NAD(+) oxidoreductase complex subunit C (443 aa).

4Fe-4S ferredoxin-type domains lie at 359–391 (ESAKIATPSNCIHCGKCVGVCPIHLQPLNIAEY) and 398–428 (DKCESNNAMDCIECGSCSYICPAKRTLVSSI). Residues Cys369, Cys372, Cys375, Cys379, Cys408, Cys411, Cys414, and Cys418 each contribute to the [4Fe-4S] cluster site.

It belongs to the 4Fe4S bacterial-type ferredoxin family. RnfC subfamily. The complex is composed of six subunits: RnfA, RnfB, RnfC, RnfD, RnfE and RnfG. It depends on [4Fe-4S] cluster as a cofactor.

It localises to the cell membrane. It catalyses the reaction 2 reduced [2Fe-2S]-[ferredoxin] + Na(+)(in) + NAD(+) + H(+) = 2 oxidized [2Fe-2S]-[ferredoxin] + Na(+)(out) + NADH. In terms of biological role, part of a membrane-bound complex that couples electron transfer with translocation of ions across the membrane. Couples electron transfer from reduced ferredoxin to NAD(+) with electrogenic movement of Na(+) out of the cell. Involved in caffeate respiration. The sequence is that of Na(+)-translocating ferredoxin:NAD(+) oxidoreductase complex subunit C from Acetobacterium woodii (strain ATCC 29683 / DSM 1030 / JCM 2381 / KCTC 1655 / WB1).